Consider the following 342-residue polypeptide: MTTLTITRPDDWHVHLRDGEVLKDTVRDISRYNGRALIMPNTVPPVTNTEMALAYRDRILAEQHGEQFEPLMALYLTDNTTPDEIRKAKATGKIVAAKLYPAGATTNSDSGVTDAKNIYHVFEAMEEVGMLLLVHGEVTHNHVDIFDREKEFLDTVLAPIVNDFPNLKIVLEHITTSDAANFVNNASDNVAATITAHHLLFNRNHMLVGGIKPHFYCLPILKRNTHQQALIEAATSGSKKFFLGTDSAPHAKGAKESACGCAGSYTAHAALELYAEVFENEGKLENLEAFASLNGPDFYGIARNTDTVTLEKASWDVPETMPFGSDIVVPIRANEKIEWEVK.

2 residues coordinate Zn(2+): H13 and H15. Residues 15-17 and N41 contribute to the substrate site; that span reads HLR. Residues K98, H135, and H173 each coordinate Zn(2+). K98 is modified (N6-carboxylysine). H135 serves as a coordination point for substrate. L218 lines the substrate pocket. Residue D246 coordinates Zn(2+). D246 is an active-site residue. H250 and A262 together coordinate substrate.

This sequence belongs to the metallo-dependent hydrolases superfamily. DHOase family. Class II DHOase subfamily. In terms of assembly, homodimer. Zn(2+) serves as cofactor.

It carries out the reaction (S)-dihydroorotate + H2O = N-carbamoyl-L-aspartate + H(+). It participates in pyrimidine metabolism; UMP biosynthesis via de novo pathway; (S)-dihydroorotate from bicarbonate: step 3/3. In terms of biological role, catalyzes the reversible cyclization of carbamoyl aspartate to dihydroorotate. This Vibrio campbellii (strain ATCC BAA-1116) protein is Dihydroorotase.